The chain runs to 364 residues: Putative [LysW]-aminoadipate semialdehyde/glutamate semialdehyde transaminase (364 aa).

Pyridoxal 5'-phosphate contacts are provided by residues 90–91 and Phe-117; that span reads GT. Substrate is bound at residue Arg-120. Pyridoxal 5'-phosphate is bound at residue 202–205; that stretch reads DEVQ. Lys-230 bears the N6-(pyridoxal phosphate)lysine mark. Residue Ser-254 participates in substrate binding. Residue Thr-255 coordinates pyridoxal 5'-phosphate.

The protein belongs to the class-III pyridoxal-phosphate-dependent aminotransferase family. LysJ subfamily. As to quaternary structure, homodimer. Pyridoxal 5'-phosphate serves as cofactor.

Its subcellular location is the cytoplasm. The enzyme catalyses [amino-group carrier protein]-C-terminal-gamma-(L-lysyl)-L-glutamate + 2-oxoglutarate = [amino-group carrier protein]-C-terminal-N-(1-carboxy-5-oxopentan-1-yl)-L-glutamine + L-glutamate. It catalyses the reaction [amino-group carrier protein]-C-terminal-gamma-(L-ornithyl)-L-glutamate + 2-oxoglutarate = [amino-group carrier protein]-C-terminal-gamma-(L-glutamyl-5-semialdehyde)-L-glutamate + L-glutamate. It functions in the pathway amino-acid biosynthesis; L-lysine biosynthesis via AAA pathway; L-lysine from L-alpha-aminoadipate (Thermus route): step 4/5. It participates in amino-acid biosynthesis; L-arginine biosynthesis. In terms of biological role, involved in both the arginine and lysine biosynthetic pathways. In Pyrococcus abyssi (strain GE5 / Orsay), this protein is Putative [LysW]-aminoadipate semialdehyde/glutamate semialdehyde transaminase.